Reading from the N-terminus, the 304-residue chain is ATP synthase gamma chain (304 aa).

This sequence belongs to the ATPase gamma chain family. In terms of assembly, F-type ATPases have 2 components, CF(1) - the catalytic core - and CF(0) - the membrane proton channel. CF(1) has five subunits: alpha(3), beta(3), gamma(1), delta(1), epsilon(1). CF(0) has three main subunits: a, b and c.

The protein localises to the cell membrane. Its function is as follows. Produces ATP from ADP in the presence of a proton gradient across the membrane. The gamma chain is believed to be important in regulating ATPase activity and the flow of protons through the CF(0) complex. This is ATP synthase gamma chain from Chloroherpeton thalassium (strain ATCC 35110 / GB-78).